Here is a 353-residue protein sequence, read N- to C-terminus: (-)-beta-caryophyllene synthase ((2E,6E)-farnesyl diphosphate cyclizing) (353 aa).

Mg(2+) contacts are provided by D85 and D89. The DDXXD motif motif lies at 85-89 (DDQFD). R179 serves as a coordination point for substrate. Positions 225 and 229 each coordinate Mg(2+). Residue K232 coordinates substrate. A Mg(2+)-binding site is contributed by E233. 320-321 (RF) is a binding site for substrate.

The protein belongs to the terpene synthase family. Mg(2+) serves as cofactor.

It carries out the reaction (2E,6E)-farnesyl diphosphate = (-)-(E)-beta-caryophyllene + diphosphate. Its pathway is secondary metabolite biosynthesis; terpenoid biosynthesis. Catalyzes the conversion of (2E,6E)-farnesyl diphosphate (FPP) to yield the bicyclic sesquiterpene (2S,10R)-(-)-(E)-beta-caryophyllene via a probable 1,10-cyclization, which could involve the abstraction of the pyrophosphate from FPP to yield a (E,E)-germacradienyl cation. This is (-)-beta-caryophyllene synthase ((2E,6E)-farnesyl diphosphate cyclizing) (ptlA) from Saccharothrix espanaensis (strain ATCC 51144 / DSM 44229 / JCM 9112 / NBRC 15066 / NRRL 15764).